The following is a 473-amino-acid chain: TOX high mobility group box family member 2 (473 aa).

Disordered stretches follow at residues 1–42 (MSDG…SLLH), 139–211 (GLRS…VSAY), 277–302 (SKSP…PPKQ), and 340–473 (LLPG…PSAR). The span at 8 to 20 (LLSTSQTYNSQGE) shows a compositional bias: polar residues. The interval 25 to 63 (YEIPPITPPNLPEPSLLHLGDHEAGYHSLCHGLAPNGLL) is required for transcriptional activation. A compositionally biased stretch (low complexity) spans 153-164 (GSKSATPSPSSS). Basic and acidic residues predominate over residues 171-188 (DAHFKISGEKRPSTDPGK). Positions 172 to 201 (AHFKISGEKRPSTDPGKKAKNPKKKKKKDP) match the Nuclear localization signal motif. The span at 189–199 (KAKNPKKKKKK) shows a compositional bias: basic residues. Positions 204-272 (PQKPVSAYAL…EYLKALAAYR (69 aa)) form a DNA-binding region, HMG box. 2 stretches are compositionally biased toward low complexity: residues 373 to 382 (LLSPPLSMSP) and 415 to 440 (SDFP…WDGS). Positions 463-473 (SPKNLQEPSAR) are enriched in polar residues.

Highly expressed in ovary, where it is restricted to undifferentiated granulosa cells. Expressed in hypothalamus, pituitary gland, testis and uterus.

The protein localises to the nucleus. Functionally, putative transcriptional activator involved in the hypothalamo-pituitary-gonadal system. The protein is TOX high mobility group box family member 2 (Tox2) of Rattus norvegicus (Rat).